A 141-amino-acid polypeptide reads, in one-letter code: Large ribosomal subunit protein bL17 (141 aa).

The protein belongs to the bacterial ribosomal protein bL17 family. In terms of assembly, part of the 50S ribosomal subunit. Contacts protein L32.

This Chlamydia trachomatis serovar D (strain ATCC VR-885 / DSM 19411 / UW-3/Cx) protein is Large ribosomal subunit protein bL17.